Here is a 113-residue protein sequence, read N- to C-terminus: Small ribosomal subunit protein uS14m (113 aa).

It belongs to the universal ribosomal protein uS14 family. Component of the mitochondrial small ribosomal subunit (mt-SSU). Mature N.crassa 74S mitochondrial ribosomes consist of a small (37S) and a large (54S) subunit. The 37S small subunit contains a 16S ribosomal RNA (16S mt-rRNA) and 32 different proteins. The 54S large subunit contains a 23S rRNA (23S mt-rRNA) and 42 different proteins.

The protein localises to the mitochondrion. Its function is as follows. Component of the mitochondrial ribosome (mitoribosome), a dedicated translation machinery responsible for the synthesis of mitochondrial genome-encoded proteins, including at least some of the essential transmembrane subunits of the mitochondrial respiratory chain. The mitoribosomes are attached to the mitochondrial inner membrane and translation products are cotranslationally integrated into the membrane. The sequence is that of Small ribosomal subunit protein uS14m (mrp2) from Neurospora crassa (strain ATCC 24698 / 74-OR23-1A / CBS 708.71 / DSM 1257 / FGSC 987).